Reading from the N-terminus, the 111-residue chain is Cytochrome c (111 aa).

A1 is subject to N-acetylalanine. C22, C25, and H26 together coordinate heme c. An N6,N6,N6-trimethyllysine modification is found at K80. M88 is a heme c binding site. At K94 the chain carries N6,N6,N6-trimethyllysine.

It belongs to the cytochrome c family. Post-translationally, binds 1 heme c group covalently per subunit.

Its subcellular location is the mitochondrion intermembrane space. Functionally, electron carrier protein. The oxidized form of the cytochrome c heme group can accept an electron from the heme group of the cytochrome c1 subunit of cytochrome reductase. Cytochrome c then transfers this electron to the cytochrome oxidase complex, the final protein carrier in the mitochondrial electron-transport chain. The chain is Cytochrome c from Cannabis sativa (Hemp).